A 302-amino-acid polypeptide reads, in one-letter code: Sulfate adenylyltransferase subunit 2 (302 aa).

It belongs to the PAPS reductase family. CysD subfamily. In terms of assembly, heterodimer composed of CysD, the smaller subunit, and CysN.

It carries out the reaction sulfate + ATP + H(+) = adenosine 5'-phosphosulfate + diphosphate. It functions in the pathway sulfur metabolism; hydrogen sulfide biosynthesis; sulfite from sulfate: step 1/3. In terms of biological role, with CysN forms the ATP sulfurylase (ATPS) that catalyzes the adenylation of sulfate producing adenosine 5'-phosphosulfate (APS) and diphosphate, the first enzymatic step in sulfur assimilation pathway. APS synthesis involves the formation of a high-energy phosphoric-sulfuric acid anhydride bond driven by GTP hydrolysis by CysN coupled to ATP hydrolysis by CysD. The protein is Sulfate adenylyltransferase subunit 2 of Xanthomonas oryzae pv. oryzae (strain MAFF 311018).